Reading from the N-terminus, the 670-residue chain is Solute carrier organic anion transporter family member 1A1 (670 aa).

The Cytoplasmic portion of the chain corresponds to 1–20 (MEETEKKVATQEGRFFSKMK). Residues 21-40 (VFLMSLTCAYLAKSLSGVYM) form a helical membrane-spanning segment. The Extracellular portion of the chain corresponds to 41 to 59 (NSMLTQIERQFGIPTSVVG). Residues 60 to 80 (FITGSFEIGNLLLIVFVSYFG) form a helical membrane-spanning segment. At 81–86 (RKLHRP) the chain is on the cytoplasmic side. Residues 87–111 (IIIGVGCVVMGLGCFLMASPHFLMG) form a helical membrane-spanning segment. Topologically, residues 112 to 155 (RYKYETTISPTSNLSSNSFLCIENRTQTLKPTQDPTECVKEIKS) are extracellular. Asn124 and Asn135 each carry an N-linked (GlcNAc...) asparagine glycan. Residues 156–184 (LMWIYVLIGNTMRGIGETPIMPLGISYIE) traverse the membrane as a helical segment. Residues 185 to 203 (DFAKSENSPLYIGILEMGK) lie on the Cytoplasmic side of the membrane. Residues 204–224 (IVGPIIGLLLGSFFARVYVDI) traverse the membrane as a helical segment. Over 225-242 (GSVNTDDLTITPTDTRWV) the chain is Extracellular. A helical membrane pass occupies residues 243 to 267 (GAWWIGFLVCAGVNILTSIPFFFFP). Topologically, residues 268–311 (KTLPKKELQDNVDVTKYEKVEKHRERAKKENLGITKDFLPFMKS) are cytoplasmic. A helical transmembrane segment spans residues 312 to 333 (LCCNPIYMLFSLTSVLQINGFA). Residues 334–353 (STFTFLPKYLEQQYGKSTSE) are Extracellular-facing. A helical transmembrane segment spans residues 354–377 (AVFLIGVYSLPPVCLGYLISGFIM). Residues 378-381 (KKFK) are Cytoplasmic-facing. A helical membrane pass occupies residues 382–405 (ITVKKAAYIAFGLSLSEYFIFLCN). The Extracellular segment spans residues 406–513 (YLLTCDNFPV…PECDNKLQYF (108 aa)). The Kazal-like domain occupies 433–488 (KNVLADCNTRCSCLTDTWDPVCGDNGLAYMSACLAGCEKSVGTGTNMVFQNCSCIG). Intrachain disulfides connect Cys439/Cys469, Cys445/Cys465, and Cys454/Cys486. N-linked (GlcNAc...) asparagine glycans are attached at residues Asn483 and Asn492. Residues 514–536 (LIKSVFSSFIFSLAAIPGYMVLL) form a helical membrane-spanning segment. Residues 537-545 (RCVKSEEKS) are Cytoplasmic-facing. Residues 546–571 (IGVGLHAFFIRLLAGIPAPVYFGALI) form a helical membrane-spanning segment. Topologically, residues 572–605 (DRTCLHWGTLKCGQPGACRMYDINRFRHIYLGLP) are extracellular. Residues 606-623 (AAVRGSSFLPAVFILILM) form a helical membrane-spanning segment. Over 624–670 (RKFHFPGDIHSPDTELAEMKLTEKESECTDVCRSPKVENDGELKTKL) the chain is Cytoplasmic. Ser634 carries the post-translational modification Phosphoserine.

It belongs to the organo anion transporter (TC 2.A.60) family. Binds to PDZK1. Interaction with PDZK1 is required for expression on hepatocyte surface. In terms of tissue distribution, highly expressed in liver, and at lower levels in kidney. Not detected in other tissues.

It is found in the basolateral cell membrane. The catalysed reaction is estrone 3-sulfate(out) + hydrogencarbonate(in) = estrone 3-sulfate(in) + hydrogencarbonate(out). It carries out the reaction taurocholate(out) + hydrogencarbonate(in) = taurocholate(in) + hydrogencarbonate(out). It catalyses the reaction L-thyroxine(out) = L-thyroxine(in). The enzyme catalyses prostaglandin E2(out) = prostaglandin E2(in). The catalysed reaction is 17beta-estradiol 17-O-(beta-D-glucuronate)(out) = 17beta-estradiol 17-O-(beta-D-glucuronate)(in). It carries out the reaction dehydroepiandrosterone 3-sulfate(out) = dehydroepiandrosterone 3-sulfate(in). Its function is as follows. Mediates the Na(+)-independent transport of organic anions such as steroid sulfate conjugates (dehydroepiandrosterone sulfate (DHEAS), 17-beta-glucuronosyl estradiol, estrone-3-sulfate), conjugated (taurocholate) and unconjugated (cholate) bile acids, prostaglandin E2 (PGE2) and L-thyroxine T4. Also capable of transporting sulfobromophthalein (BSP), ouabain and gadoxetate. Hydrogencarbonate/HCO3(-) acts as the probable counteranion that exchanges for organic anions. Shows a pH-sensitive substrate specificity which may be ascribed to the protonation state of the binding site and leads to a stimulation of substrate transport in an acidic microenvironment. This is Solute carrier organic anion transporter family member 1A1 from Mus musculus (Mouse).